Here is a 300-residue protein sequence, read N- to C-terminus: MSTGNAATRGSAHFGTISLAMVTPFKKDGSIDLDAGVALAGHFVDEGCDSLVLAGTTGESPTTGATEKLDLLRAVRSELGDSVKLIAGSGSYDTAVTVEMSRASQEAGADSLLVVTPYYSRPSQEGIYQHFTTVADAVDIPVCVYDIPSRSVVPVEPETLHRLADHPQIAAVKDAKGDLAAGMELIENTDLAWYSGDDPLNLPWLAAGATGFISVIGHVATRQLKQLRDAFDAGDIATARSIAVQLQPLQKAQARLGGVTFAKAALKLKGKDVGAPRLPIIEPTAAEMDQLAQDLQAAGV.

Position 57 (Thr-57) interacts with pyruvate. The Proton donor/acceptor role is filled by Tyr-145. The active-site Schiff-base intermediate with substrate is Lys-173. Ile-213 lines the pyruvate pocket.

This sequence belongs to the DapA family. In terms of assembly, homotetramer; dimer of dimers.

It is found in the cytoplasm. It catalyses the reaction L-aspartate 4-semialdehyde + pyruvate = (2S,4S)-4-hydroxy-2,3,4,5-tetrahydrodipicolinate + H2O + H(+). The protein operates within amino-acid biosynthesis; L-lysine biosynthesis via DAP pathway; (S)-tetrahydrodipicolinate from L-aspartate: step 3/4. Functionally, catalyzes the condensation of (S)-aspartate-beta-semialdehyde [(S)-ASA] and pyruvate to 4-hydroxy-tetrahydrodipicolinate (HTPA). The chain is 4-hydroxy-tetrahydrodipicolinate synthase from Corynebacterium jeikeium (strain K411).